The sequence spans 345 residues: Holliday junction branch migration complex subunit RuvB (345 aa).

The large ATPase domain (RuvB-L) stretch occupies residues 1-182; it reads MQRLVEVESV…FGMHFRMQFY (182 aa). ATP contacts are provided by residues Leu21, Arg22, Gly63, Lys66, Thr67, Thr68, 129–131, Arg172, Tyr182, and Arg219; that span reads EDY. Thr67 serves as a coordination point for Mg(2+). A small ATPAse domain (RuvB-S) region spans residues 183-253; it reads TEIELAKIIQ…RCKYALDELG (71 aa). Residues 256-345 are head domain (RuvB-H); the sequence is ESGFDEMDIN…EDDLTQGKLF (90 aa). DNA is bound by residues Arg310 and Arg315.

It belongs to the RuvB family. As to quaternary structure, homohexamer. Forms an RuvA(8)-RuvB(12)-Holliday junction (HJ) complex. HJ DNA is sandwiched between 2 RuvA tetramers; dsDNA enters through RuvA and exits via RuvB. An RuvB hexamer assembles on each DNA strand where it exits the tetramer. Each RuvB hexamer is contacted by two RuvA subunits (via domain III) on 2 adjacent RuvB subunits; this complex drives branch migration. In the full resolvosome a probable DNA-RuvA(4)-RuvB(12)-RuvC(2) complex forms which resolves the HJ.

The protein resides in the cytoplasm. The catalysed reaction is ATP + H2O = ADP + phosphate + H(+). The RuvA-RuvB-RuvC complex processes Holliday junction (HJ) DNA during genetic recombination and DNA repair, while the RuvA-RuvB complex plays an important role in the rescue of blocked DNA replication forks via replication fork reversal (RFR). RuvA specifically binds to HJ cruciform DNA, conferring on it an open structure. The RuvB hexamer acts as an ATP-dependent pump, pulling dsDNA into and through the RuvAB complex. RuvB forms 2 homohexamers on either side of HJ DNA bound by 1 or 2 RuvA tetramers; 4 subunits per hexamer contact DNA at a time. Coordinated motions by a converter formed by DNA-disengaged RuvB subunits stimulates ATP hydrolysis and nucleotide exchange. Immobilization of the converter enables RuvB to convert the ATP-contained energy into a lever motion, pulling 2 nucleotides of DNA out of the RuvA tetramer per ATP hydrolyzed, thus driving DNA branch migration. The RuvB motors rotate together with the DNA substrate, which together with the progressing nucleotide cycle form the mechanistic basis for DNA recombination by continuous HJ branch migration. Branch migration allows RuvC to scan DNA until it finds its consensus sequence, where it cleaves and resolves cruciform DNA. In Aliarcobacter butzleri (strain RM4018) (Arcobacter butzleri), this protein is Holliday junction branch migration complex subunit RuvB.